Consider the following 135-residue polypeptide: UPF0299 membrane protein YE2790 (135 aa).

4 helical membrane passes run 4–24 (VTSL…CLWA), 30–50 (LLLP…FALL), 63–83 (GCHL…VGVM), and 93–113 (FGPI…VVGY).

This sequence belongs to the UPF0299 family.

The protein localises to the cell inner membrane. This chain is UPF0299 membrane protein YE2790, found in Yersinia enterocolitica serotype O:8 / biotype 1B (strain NCTC 13174 / 8081).